The chain runs to 491 residues: Glutamyl-tRNA(Gln) amidotransferase subunit A (491 aa).

Active-site charge relay system residues include Lys76 and Ser154. Ser178 functions as the Acyl-ester intermediate in the catalytic mechanism.

The protein belongs to the amidase family. GatA subfamily. In terms of assembly, heterotrimer of A, B and C subunits.

It carries out the reaction L-glutamyl-tRNA(Gln) + L-glutamine + ATP + H2O = L-glutaminyl-tRNA(Gln) + L-glutamate + ADP + phosphate + H(+). Functionally, allows the formation of correctly charged Gln-tRNA(Gln) through the transamidation of misacylated Glu-tRNA(Gln) in organisms which lack glutaminyl-tRNA synthetase. The reaction takes place in the presence of glutamine and ATP through an activated gamma-phospho-Glu-tRNA(Gln). This is Glutamyl-tRNA(Gln) amidotransferase subunit A from Cereibacter sphaeroides (strain KD131 / KCTC 12085) (Rhodobacter sphaeroides).